A 296-amino-acid polypeptide reads, in one-letter code: Cell division protein DivIB (296 aa).

At M1–R29 the chain is on the cytoplasmic side. A helical transmembrane segment spans residues M30–I50. The region spanning S51 to H119 is the POTRA domain. The Extracellular portion of the chain corresponds to S51–E296. A compositionally biased stretch (polar residues) spans N256 to A273. A disordered region spans residues N256–E296. Residues S274–E296 are compositionally biased toward basic and acidic residues.

It belongs to the FtsQ/DivIB family. DivIB subfamily.

It is found in the cell membrane. In terms of biological role, cell division protein that may be involved in stabilizing or promoting the assembly of the division complex. The sequence is that of Cell division protein DivIB from Staphylococcus pseudintermedius (strain HKU10-03).